Reading from the N-terminus, the 107-residue chain is Flagellar hook-basal body complex protein FliE (107 aa).

The protein belongs to the FliE family.

The protein resides in the bacterial flagellum basal body. This Cupriavidus pinatubonensis (strain JMP 134 / LMG 1197) (Cupriavidus necator (strain JMP 134)) protein is Flagellar hook-basal body complex protein FliE.